The chain runs to 502 residues: Probable cytosol aminopeptidase (502 aa).

Positions 258 and 263 each coordinate Mn(2+). Lysine 270 is a catalytic residue. Positions 281, 340, and 342 each coordinate Mn(2+). Residue arginine 344 is part of the active site.

The protein belongs to the peptidase M17 family. Requires Mn(2+) as cofactor.

It localises to the cytoplasm. The enzyme catalyses Release of an N-terminal amino acid, Xaa-|-Yaa-, in which Xaa is preferably Leu, but may be other amino acids including Pro although not Arg or Lys, and Yaa may be Pro. Amino acid amides and methyl esters are also readily hydrolyzed, but rates on arylamides are exceedingly low.. The catalysed reaction is Release of an N-terminal amino acid, preferentially leucine, but not glutamic or aspartic acids.. Its function is as follows. Presumably involved in the processing and regular turnover of intracellular proteins. Catalyzes the removal of unsubstituted N-terminal amino acids from various peptides. This chain is Probable cytosol aminopeptidase, found in Clavibacter michiganensis subsp. michiganensis (strain NCPPB 382).